The following is a 284-amino-acid chain: Ubiquitin thioesterase otubain-like (284 aa).

Residues glycine 77–lysine 274 enclose the OTU domain. Residue aspartate 85 is part of the active site. Cysteine 88 acts as the Nucleophile in catalysis. Isoleucine 176 is a binding site for substrate. Residues histidine 245 and histidine 267 contribute to the active site.

It belongs to the peptidase C65 family.

The enzyme catalyses Thiol-dependent hydrolysis of ester, thioester, amide, peptide and isopeptide bonds formed by the C-terminal Gly of ubiquitin (a 76-residue protein attached to proteins as an intracellular targeting signal).. In terms of biological role, hydrolase that can remove conjugated ubiquitin from proteins and plays an important regulatory role at the level of protein turnover by preventing degradation. Specifically cleaves 'Lys-48'-linked polyubiquitin. This chain is Ubiquitin thioesterase otubain-like (otub-1), found in Caenorhabditis elegans.